Here is a 519-residue protein sequence, read N- to C-terminus: Sorting nexin-2 (519 aa).

Disordered stretches follow at residues 1–20 (MAAE…DFEE) and 30–103 (STVS…VTPV). Composition is skewed to low complexity over residues 30-44 (STVS…SPDP) and 93-103 (SSETSPAVTPV). S97 is modified (phosphoserine). Phosphothreonine is present on residues T101 and T104. Phosphoserine is present on residues S117 and S119. A PX domain is found at 140–269 (FDIEIGVSDP…QFLESSELPR (130 aa)). Residues R183, S185, K211, and R235 each contribute to the a 1,2-diacyl-sn-glycero-3-phospho-(1D-myo-inositol-3-phosphate) site. At S185 the chain carries Phosphoserine. Residues 260–519 (QFLESSELPR…AFLPEAKAIA (260 aa)) form an interaction with RhoG region. At S277 the chain carries Phosphoserine. The membrane-binding amphipathic helix stretch occupies residues 278 to 295 (GAGILRMVNKAADAVNKM). Residues 299–519 (MNESDAWFEE…AFLPEAKAIA (221 aa)) enclose the BAR domain. The residue at position 469 (K469) is an N6-acetyllysine.

The protein belongs to the sorting nexin family. In terms of assembly, predominantly forms heterodimers with BAR domain-containing sorting nexins SNX5, SNX6 and SNX32; can self-associate to form homodimers. The heterodimers are proposed to self-assemble into helical arrays on the membrane to stabilize and expand local membrane curvature underlying endosomal tubule formation. Thought to be a component of the originally described retromer complex (also called SNX-BAR retromer) which is a pentamer containing the heterotrimeric retromer cargo-selective complex (CSC), also decribed as vacuolar protein sorting subcomplex (VPS) and a heterodimeric membrane-deforming subcomplex formed between SNX1 or SNX2 and SNX5 or SNX6 (also called SNX-BAR subcomplex); the respective CSC and SNX-BAR subcomplexes associate with low affinity. Interacts with SNX5, SNX6, SNX32, VPS26A, VPS29, VPS35, FNBP1, KALRN, RHOG (GDP-bound form).

The protein localises to the early endosome membrane. The protein resides in the cell projection. It localises to the lamellipodium. Involved in several stages of intracellular trafficking. Interacts with membranes containing phosphatidylinositol 3-phosphate (PtdIns(3P)) or phosphatidylinositol 3,5-bisphosphate (PtdIns(3,5)P2). Acts in part as component of the retromer membrane-deforming SNX-BAR subcomplex. The SNX-BAR retromer mediates retrograde transport of cargo proteins from endosomes to the trans-Golgi network (TGN) and is involved in endosome-to-plasma membrane transport for cargo protein recycling. The SNX-BAR subcomplex functions to deform the donor membrane into a tubular profile called endosome-to-TGN transport carrier (ETC). Can sense membrane curvature and has in vitro vesicle-to-membrane remodeling activity. Required for retrograde endosome-to-TGN transport of TGN38. Promotes KALRN- and RHOG-dependent but retromer-independent membrane remodeling such as lamellipodium formation; the function is dependent on GEF activity of KALRN. The chain is Sorting nexin-2 (SNX2) from Bos taurus (Bovine).